A 304-amino-acid chain; its full sequence is UDP-N-acetylenolpyruvoylglucosamine reductase (304 aa).

An FAD-binding PCMH-type domain is found at 33–198 (RVGGPADILV…IEATIELESG (166 aa)). Arg-177 is a catalytic residue. Ser-227 acts as the Proton donor in catalysis. Glu-297 is an active-site residue.

The protein belongs to the MurB family. The cofactor is FAD.

Its subcellular location is the cytoplasm. The enzyme catalyses UDP-N-acetyl-alpha-D-muramate + NADP(+) = UDP-N-acetyl-3-O-(1-carboxyvinyl)-alpha-D-glucosamine + NADPH + H(+). It functions in the pathway cell wall biogenesis; peptidoglycan biosynthesis. Cell wall formation. The sequence is that of UDP-N-acetylenolpyruvoylglucosamine reductase from Clostridium perfringens (strain SM101 / Type A).